We begin with the raw amino-acid sequence, 284 residues long: 2,3,4,5-tetrahydropyridine-2,6-dicarboxylate N-succinyltransferase (284 aa).

Substrate is bound by residues R111 and D148.

This sequence belongs to the transferase hexapeptide repeat family. In terms of assembly, homotrimer.

The protein localises to the cytoplasm. It carries out the reaction (S)-2,3,4,5-tetrahydrodipicolinate + succinyl-CoA + H2O = (S)-2-succinylamino-6-oxoheptanedioate + CoA. Its pathway is amino-acid biosynthesis; L-lysine biosynthesis via DAP pathway; LL-2,6-diaminopimelate from (S)-tetrahydrodipicolinate (succinylase route): step 1/3. The protein is 2,3,4,5-tetrahydropyridine-2,6-dicarboxylate N-succinyltransferase of Mesorhizobium japonicum (strain LMG 29417 / CECT 9101 / MAFF 303099) (Mesorhizobium loti (strain MAFF 303099)).